The following is a 457-amino-acid chain: Phosphoglucosamine mutase (457 aa).

The active-site Phosphoserine intermediate is Ser-103. Positions 103, 244, 246, and 248 each coordinate Mg(2+). A Phosphoserine modification is found at Ser-103.

This sequence belongs to the phosphohexose mutase family. The cofactor is Mg(2+). In terms of processing, activated by phosphorylation.

It catalyses the reaction alpha-D-glucosamine 1-phosphate = D-glucosamine 6-phosphate. Functionally, catalyzes the conversion of glucosamine-6-phosphate to glucosamine-1-phosphate. In Granulibacter bethesdensis (strain ATCC BAA-1260 / CGDNIH1), this protein is Phosphoglucosamine mutase.